The sequence spans 672 residues: Acetyl-coenzyme A synthetase (672 aa).

CoA is bound by residues 217 to 220 (RRGK) and T335. ATP contacts are provided by residues 411 to 413 (GEP), 435 to 440 (DTWWQT), D529, R544, and R555. Mg(2+)-binding residues include V566, H568, and I571. R613 is a binding site for CoA. N6-acetyllysine is present on K638.

This sequence belongs to the ATP-dependent AMP-binding enzyme family. Requires Mg(2+) as cofactor. Acetylated. Deacetylation by the SIR2-homolog deacetylase activates the enzyme. In terms of processing, the N-terminus is blocked.

It carries out the reaction acetate + ATP + CoA = acetyl-CoA + AMP + diphosphate. Functionally, catalyzes the conversion of acetate into acetyl-CoA (AcCoA), an essential intermediate at the junction of anabolic and catabolic pathways. AcsA undergoes a two-step reaction. In the first half reaction, AcsA combines acetate with ATP to form acetyl-adenylate (AcAMP) intermediate. In the second half reaction, it can then transfer the acetyl group from AcAMP to the sulfhydryl group of CoA, forming the product AcCoA. This chain is Acetyl-coenzyme A synthetase, found in Methanothrix soehngenii (Methanosaeta concilii).